A 264-amino-acid chain; its full sequence is Teichoic acids export ATP-binding protein TagH (264 aa).

Residues Ile24–Lys243 enclose the ABC transporter domain. Residue Gly57–Ser64 coordinates ATP.

It belongs to the ABC transporter superfamily. Teichoic acids exporter (TC 3.A.1.104.1) family. In terms of assembly, the complex is composed of two ATP-binding proteins (TagH) and two transmembrane proteins (TagG).

The protein localises to the cell membrane. The catalysed reaction is ATP + H2O + teichoic acidSide 1 = ADP + phosphate + teichoic acidSide 2.. Part of the ABC transporter complex TagGH involved in teichoic acids export. Responsible for energy coupling to the transport system. The protein is Teichoic acids export ATP-binding protein TagH of Staphylococcus haemolyticus (strain JCSC1435).